A 273-amino-acid chain; its full sequence is Putative pyruvate, phosphate dikinase regulatory protein (273 aa).

153-160 is an ADP binding site; it reads GISRTSKT.

It belongs to the pyruvate, phosphate/water dikinase regulatory protein family. PDRP subfamily.

It carries out the reaction N(tele)-phospho-L-histidyl/L-threonyl-[pyruvate, phosphate dikinase] + ADP = N(tele)-phospho-L-histidyl/O-phospho-L-threonyl-[pyruvate, phosphate dikinase] + AMP + H(+). It catalyses the reaction N(tele)-phospho-L-histidyl/O-phospho-L-threonyl-[pyruvate, phosphate dikinase] + phosphate + H(+) = N(tele)-phospho-L-histidyl/L-threonyl-[pyruvate, phosphate dikinase] + diphosphate. Its function is as follows. Bifunctional serine/threonine kinase and phosphorylase involved in the regulation of the pyruvate, phosphate dikinase (PPDK) by catalyzing its phosphorylation/dephosphorylation. This Rhizobium leguminosarum bv. trifolii (strain WSM2304) protein is Putative pyruvate, phosphate dikinase regulatory protein.